The primary structure comprises 415 residues: ATP-dependent Clp protease ATP-binding subunit ClpX (415 aa).

Residues M1–K52 enclose the ClpX-type ZB domain. Zn(2+) is bound by residues C11, C14, C33, and C36. S121 to L128 lines the ATP pocket.

Belongs to the ClpX chaperone family. Component of the ClpX-ClpP complex. Forms a hexameric ring that, in the presence of ATP, binds to fourteen ClpP subunits assembled into a disk-like structure with a central cavity, resembling the structure of eukaryotic proteasomes.

ATP-dependent specificity component of the Clp protease. It directs the protease to specific substrates. Can perform chaperone functions in the absence of ClpP. The chain is ATP-dependent Clp protease ATP-binding subunit ClpX from Bacteroides fragilis (strain ATCC 25285 / DSM 2151 / CCUG 4856 / JCM 11019 / LMG 10263 / NCTC 9343 / Onslow / VPI 2553 / EN-2).